The chain runs to 367 residues: Ferrochelatase (367 aa).

Histidine 226 and glutamate 307 together coordinate Fe cation.

The protein belongs to the ferrochelatase family.

It is found in the cytoplasm. It carries out the reaction heme b + 2 H(+) = protoporphyrin IX + Fe(2+). It functions in the pathway porphyrin-containing compound metabolism; protoheme biosynthesis; protoheme from protoporphyrin-IX: step 1/1. Catalyzes the ferrous insertion into protoporphyrin IX. The chain is Ferrochelatase from Burkholderia mallei (strain NCTC 10247).